A 395-amino-acid polypeptide reads, in one-letter code: Envelope glycoprotein D (395 aa).

The first 17 residues, 1 to 17, serve as a signal peptide directing secretion; it reads MGSGIAAVLLSLAVALA. At 18 to 342 the chain is on the virion surface side; the sequence is RVPAGEGEYV…PAPAPSGHTG (325 aa). Histidine 63 serves as a coordination point for Zn(2+). 3 cysteine pairs are disulfide-bonded: cysteine 90–cysteine 214, cysteine 131–cysteine 227, and cysteine 143–cysteine 152. Asparagine 119 carries N-linked (GlcNAc...) asparagine; by host glycosylation. Aspartate 240 provides a ligand contact to Zn(2+). Residues 261-306 are profusion; that stretch reads LQAAGWHGPKAPFTSTLLPPEVVETANVTRPELAPEERGTSRTPGD. The N-linked (GlcNAc...) asparagine; by host glycan is linked to asparagine 287. The segment at 289–314 is disordered; that stretch reads TRPELAPEERGTSRTPGDEPAPAVAA. Residues 343 to 362 traverse the membrane as a helical segment; the sequence is AVVGALAGAGLAAGVVVLAV. At 363-395 the chain is on the intravirion side; sequence YLVRRRGRAAGKHVRLPELLEEAHGPARRGAPY.

This sequence belongs to the herpesviridae glycoprotein D family.

The protein resides in the virion membrane. In terms of biological role, envelope glycoprotein that binds to host cell entry receptors, promoting the virus entry into host cells. May trigger fusion with host membrane, by recruiting the fusion machinery composed of gB and gH/gL. The protein is Envelope glycoprotein D (gD) of Cercopithecine herpesvirus 1 (CeHV-1).